Here is a 370-residue protein sequence, read N- to C-terminus: Phospho-2-dehydro-3-deoxyheptonate aldolase, tyrosine-inhibited (370 aa).

Residue Ser2 is modified to N-acetylserine.

The protein belongs to the class-I DAHP synthase family.

The enzyme catalyses D-erythrose 4-phosphate + phosphoenolpyruvate + H2O = 7-phospho-2-dehydro-3-deoxy-D-arabino-heptonate + phosphate. It participates in metabolic intermediate biosynthesis; chorismate biosynthesis; chorismate from D-erythrose 4-phosphate and phosphoenolpyruvate: step 1/7. With respect to regulation, inhibited by tyrosine. Stereospecific condensation of phosphoenolpyruvate (PEP) and D-erythrose-4-phosphate (E4P) giving rise to 3-deoxy-D-arabino-heptulosonate-7-phosphate (DAHP). The protein is Phospho-2-dehydro-3-deoxyheptonate aldolase, tyrosine-inhibited (ARO4) of Saccharomyces cerevisiae (strain ATCC 204508 / S288c) (Baker's yeast).